A 67-amino-acid polypeptide reads, in one-letter code: Moricin (67 aa).

The N-terminal stretch at 1 to 23 (MKLTSLFIFVIVALSLLFSSTDA) is a signal peptide.

It belongs to the moricin family. Monomer.

It localises to the secreted. Functionally, antimicrobial peptide. Active against a broad spectrum of Gram-positive and Gram-negative bacteria including methicillin-resistant S.aureus ATCC 43 300, S.aureus BAA-39, pathogenic strains of L.monocytogenes, K.pneumoniae, E.coli O157:H7, S.typhimurium and multidrug-resistant S.typhimurium DT104 with minimum inhibitory concentration (MIC) of 1.4 uM for all except for S.aureus BAA-39. Also active against Serratia marcescens. Probably acts by disturbing membrane functions with its amphipathic alpha-helical structure. May protect a developing embryo from bacterial infection. This Manduca sexta (Tobacco hawkmoth) protein is Moricin.